A 269-amino-acid polypeptide reads, in one-letter code: Tryptophan synthase alpha chain (269 aa).

Residues E49 and D60 each act as proton acceptor in the active site.

The protein belongs to the TrpA family. In terms of assembly, tetramer of two alpha and two beta chains.

The catalysed reaction is (1S,2R)-1-C-(indol-3-yl)glycerol 3-phosphate + L-serine = D-glyceraldehyde 3-phosphate + L-tryptophan + H2O. The protein operates within amino-acid biosynthesis; L-tryptophan biosynthesis; L-tryptophan from chorismate: step 5/5. Its function is as follows. The alpha subunit is responsible for the aldol cleavage of indoleglycerol phosphate to indole and glyceraldehyde 3-phosphate. The sequence is that of Tryptophan synthase alpha chain from Histophilus somni (strain 2336) (Haemophilus somnus).